We begin with the raw amino-acid sequence, 271 residues long: Inactive phospholipid phosphatase 7 (271 aa).

Positions 1–66 (MPASQSRARA…RERRQSQQLP (66 aa)) are disordered. Residues 1-112 (MPASQSRARA…AASWASARSM (112 aa)) lie on the Cytoplasmic side of the membrane. Phosphoserine occurs at positions 43 and 62. The interaction with MTOR stretch occupies residues 70–91 (CMQLNPSFKGIAFNSLLAIDIC). Residues 113 to 133 (VKLIGITGHGIPWIGGTILCL) traverse the membrane as a helical segment. Topologically, residues 134–141 (VKSSTLAG) are extracellular. The chain crosses the membrane as a helical span at residues 142 to 162 (QEVLMNLLLALLLDIMTVAGV). Residues 163–202 (QKLIKRRGPYETSPSLLDYLTMDIYAFPAGHASRAAMVSK) lie on the Cytoplasmic side of the membrane. The helical transmembrane segment at 203 to 223 (FFLSHLVLAVPLRVLLVLWAL) threads the bilayer. At 224-239 (CVGLSRVMIGRHHVTD) the chain is on the extracellular side. The chain crosses the membrane as a helical span at residues 240-260 (VLSGFVIGYLQFRLVELVWMP). Residues 261 to 271 (SSTCQMLISAW) lie on the Cytoplasmic side of the membrane.

Belongs to the PA-phosphatase related phosphoesterase family. As to quaternary structure, homo and heterooligomer. Interacts with MTOR; controls MTOR-dependent IGF2 expression during myoblast differentiation.

It is found in the nucleus envelope. It localises to the endoplasmic reticulum membrane. Its subcellular location is the membrane. Plays a role as negative regulator of myoblast differentiation, in part through effects on MTOR signaling. Has no detectable enzymatic activity. The protein is Inactive phospholipid phosphatase 7 of Homo sapiens (Human).